A 288-amino-acid polypeptide reads, in one-letter code: Shikimate dehydrogenase (NADP(+)) (288 aa).

Shikimate is bound by residues 14-16 (SIS) and Thr63. Residue Lys67 is the Proton acceptor of the active site. Glu79 contributes to the NADP(+) binding site. Positions 88 and 103 each coordinate shikimate. NADP(+) contacts are provided by residues 127 to 131 (GSGGA), 151 to 156 (NRTYEK), and Met219. Tyr221 contributes to the shikimate binding site. Gly242 provides a ligand contact to NADP(+).

Belongs to the shikimate dehydrogenase family. In terms of assembly, homodimer.

It carries out the reaction shikimate + NADP(+) = 3-dehydroshikimate + NADPH + H(+). Its pathway is metabolic intermediate biosynthesis; chorismate biosynthesis; chorismate from D-erythrose 4-phosphate and phosphoenolpyruvate: step 4/7. In terms of biological role, involved in the biosynthesis of the chorismate, which leads to the biosynthesis of aromatic amino acids. Catalyzes the reversible NADPH linked reduction of 3-dehydroshikimate (DHSA) to yield shikimate (SA). This is Shikimate dehydrogenase (NADP(+)) from Caldicellulosiruptor bescii (strain ATCC BAA-1888 / DSM 6725 / KCTC 15123 / Z-1320) (Anaerocellum thermophilum).